The chain runs to 419 residues: MFSPGQEEPSAPNKEPVKYRELVVLGYNGALPNGDRGRRKSRFALYKRTYASGVKPSTIHMVSTPQASKAISSRGHHSISYTLSRSQTVVVEYTHDKDTDMFQVGRSTESPIDFVVTDTVSGGQNEDAQITQSTISRFACRIVCDRNEPYTARIFAAGFDSSKNIFLGEKAAKWKNPDGHMDGLTTNGVLVMHPQGGFTEESQPGVWREISVCGDVYTLRETRSAQQRGKLVESETNVLQDGSLIDLCGATLLWRTADGLFHAPTQKHIEALRQEINAARPQCPVGLNTLAFPSINRKEVVEEKQPWAYLSCGHVHGYHSWGHRSDTEANERECPMCRTVGPYVPLWLGCEAGFYVDAGPPTHAFTPCGHVCSEKSAKYWSQIPLPHGTHAFHAACPFCATQLVGEQNCIKLIFQGPVD.

The FHA; atypical domain occupies 15–202 (EPVKYRELVV…HPQGGFTEES (188 aa)).

This sequence belongs to the pellino family. Interacts with TRAF6, IRAK4 and MAP3K7. Interacts with IRAK1. Interacts with BCL10; this interaction is impaired by SOCS3. Phosphorylated by IRAK1 and IRAK4 enhancing its E3 ligase activity. As to expression, widely expressed both in embryos and adult. Weakly or not expressed in spleen and thymus.

The catalysed reaction is S-ubiquitinyl-[E2 ubiquitin-conjugating enzyme]-L-cysteine + [acceptor protein]-L-lysine = [E2 ubiquitin-conjugating enzyme]-L-cysteine + N(6)-ubiquitinyl-[acceptor protein]-L-lysine.. Its pathway is protein modification; protein ubiquitination. E3 ubiquitin ligase catalyzing the covalent attachment of ubiquitin moieties onto substrate proteins. Involved in the TLR and IL-1 signaling pathways via interaction with the complex containing IRAK kinases and TRAF6. Mediates IL1B-induced IRAK1 'Lys-63'-linked polyubiquitination and possibly 'Lys-48'-linked ubiquitination. May be important for LPS- and IL1B-induced MAP3K7-dependent, but not MAP3K3-dependent, NF-kappa-B activation. Can activate the MAP (mitogen activated protein) kinase pathway leading to activation of ELK1. The chain is E3 ubiquitin-protein ligase pellino homolog 2 (Peli2) from Mus musculus (Mouse).